The primary structure comprises 176 residues: Transcription factor E (176 aa).

The 85-residue stretch at 5-89 folds into the HTH TFE/IIEalpha-type domain; it reads IDQLMKDMAR…YWKANVDQIN (85 aa).

The protein belongs to the TFE family. As to quaternary structure, monomer. Interaction with RNA polymerase subunits RpoF and RpoE is necessary for Tfe stimulatory transcription activity. Able to interact with Tbp and RNA polymerase in the absence of DNA promoter. Interacts both with the preinitiation and elongation complexes.

In terms of biological role, transcription factor that plays a role in the activation of archaeal genes transcribed by RNA polymerase. Facilitates transcription initiation by enhancing TATA-box recognition by TATA-box-binding protein (Tbp), and transcription factor B (Tfb) and RNA polymerase recruitment. Not absolutely required for transcription in vitro, but particularly important in cases where Tbp or Tfb function is not optimal. It dynamically alters the nucleic acid-binding properties of RNA polymerases by stabilizing the initiation complex and destabilizing elongation complexes. Seems to translocate with the RNA polymerase following initiation and acts by binding to the non template strand of the transcription bubble in elongation complexes. The polypeptide is Transcription factor E (Metallosphaera sedula (strain ATCC 51363 / DSM 5348 / JCM 9185 / NBRC 15509 / TH2)).